The following is a 659-amino-acid chain: MVAKWCVLAMCLLVAVGADKCPRATDQEAKQKRMLEVLQHVNKPYVAETKDPKIPAGSEDVFKHLGILEKHEVFSLFDERQWDEATTAAVYMLTAPSFDEFIDRAEIVRHRINEDMFYYAFSVAAVHRDDTRGINLPRIHEIYPDKFLKHKVIVEVKNSINSGQEDPLIDATHEFTDLRDPNSKLHYFLEDVGLNSHHYHWHVIHPAVWQESLEELTHQHKDRKGELFYFMHHQMVNRYDAERLSNGLPRSTTFENWNDPIETGYAPHLTIDRTGYRYQFRPDNLVVRDLPELTKNHMRQWRDRILYAVHRGEALAANGSSVSLRDERGIDVLGNMVESSLQSINRPFYGNVHCYAHVIAARIADPDGKYGEDNGAMYDVATSARDPLFYQWHKFIDNLFHEYKDALKAYSSEDLTYNDITIEEVNVQGEGGSPANTVTTFLENSIVHLDEGFSFTARGHARVKVQHLQHEGFNYQIKVNNAGGEHKVVFRVFLAPKYDEEHHEFDFNEQRGMAIELDKFVATVPAGSSTVEQHSSKSSVTQSNDNFYGSSATRSSENHCSCGWPDYLLIPKGNHQGVQFNVYVIATSYDEDHVESDESCHCGDSLSYCGALYDKYPDRRPMGYPFDRHADAQTFDEFKTKNMNSVTVTIKHTGEVKDA.

The signal sequence occupies residues 1–18 (MVAKWCVLAMCLLVAVGA). Positions 198, 202, and 232 each coordinate Cu cation. Asn-318 carries an N-linked (GlcNAc...) asparagine glycan. The Cu cation site is built by His-353, His-357, and His-393. Cys-562 and Cys-609 form a disulfide bridge.

The protein belongs to the tyrosinase family. Hemocyanin subfamily. 36-chain polymer consisting of 6 hexamers, each of which includes 4 different chains, A, B, C and D. In terms of tissue distribution, hemolymph.

The protein localises to the secreted. It localises to the extracellular space. In terms of biological role, hemocyanins are copper-containing oxygen carriers occurring freely dissolved in the hemolymph of many mollusks and arthropods. The chain is Hemocyanin subunit B (HCB) from Scutigera coleoptrata (House centipede).